We begin with the raw amino-acid sequence, 132 residues long: Small ribosomal subunit protein eS24 (132 aa).

Over residues 90–100 (RLAKHGLYEKK) the composition is skewed to basic and acidic residues. The disordered stretch occupies residues 90-132 (RLAKHGLYEKKKTSRKQRKERKNRMKKVRGTAKANVGAGKKKD). The segment covering 101–119 (KTSRKQRKERKNRMKKVRG) has biased composition (basic residues).

Belongs to the eukaryotic ribosomal protein eS24 family. In terms of assembly, component of the small ribosomal subunit. Part of the small subunit (SSU) processome, composed of more than 70 proteins and the RNA chaperone small nucleolar RNA (snoRNA) U3.

Its subcellular location is the cytoplasm. The protein resides in the nucleus. It is found in the nucleolus. In terms of biological role, component of the small ribosomal subunit. The ribosome is a large ribonucleoprotein complex responsible for the synthesis of proteins in the cell. Required for processing of pre-rRNA and maturation of 40S ribosomal subunits. Part of the small subunit (SSU) processome, first precursor of the small eukaryotic ribosomal subunit. During the assembly of the SSU processome in the nucleolus, many ribosome biogenesis factors, an RNA chaperone and ribosomal proteins associate with the nascent pre-rRNA and work in concert to generate RNA folding, modifications, rearrangements and cleavage as well as targeted degradation of pre-ribosomal RNA by the RNA exosome. The sequence is that of Small ribosomal subunit protein eS24 (rps24) from Xenopus laevis (African clawed frog).